Reading from the N-terminus, the 76-residue chain is Proteolipid protein 2 (76 aa).

Residues 1–60 (ISGPWSDFFRALGAVILYLMTSIVVLVERGNNSKGAAGVLGLCAAGLFGYDAYITFPSGT) enclose the MARVEL domain. The helical transmembrane segment at 8–28 (FFRALGAVILYLMTSIVVLVE) threads the bilayer. Asn31 is a glycosylation site (N-linked (GlcNAc...) asparagine). A helical transmembrane segment spans residues 36-56 (AAGVLGLCAAGLFGYDAYITF).

Its subcellular location is the membrane. In terms of biological role, may play a role in cell differentiation in the intestinal epithelium. This Ovis aries (Sheep) protein is Proteolipid protein 2 (PLP2).